We begin with the raw amino-acid sequence, 196 residues long: Probable malonic semialdehyde reductase RutE (196 aa).

This sequence belongs to the nitroreductase family. HadB/RutE subfamily. FMN is required as a cofactor.

It catalyses the reaction 3-hydroxypropanoate + NADP(+) = 3-oxopropanoate + NADPH + H(+). Functionally, may reduce toxic product malonic semialdehyde to 3-hydroxypropionic acid, which is excreted. This chain is Probable malonic semialdehyde reductase RutE, found in Shigella dysenteriae serotype 1 (strain Sd197).